The sequence spans 180 residues: Calcium-binding protein E (180 aa).

4 consecutive EF-hand domains span residues 3 to 38, 40 to 76, 85 to 120, and 139 to 174; these read KVEA…NSNI, DPLA…KKIK, ALRS…DPDF, and RAKS…HPEF. The Ca(2+) site is built by Asp16, Asp18, Asp20, Asn22, and Glu27. 9 residues coordinate Ca(2+): Asp98, Asp100, Asp102, Glu109, Asp152, Asp154, Asn156, Lys158, and Glu163.

This chain is Calcium-binding protein E (cbpE), found in Dictyostelium discoideum (Social amoeba).